The following is a 169-amino-acid chain: Putative outer membrane protein BBA03 (169 aa).

The protein resides in the cell outer membrane. The sequence is that of Putative outer membrane protein BBA03 from Borreliella burgdorferi (strain ATCC 35210 / DSM 4680 / CIP 102532 / B31) (Borrelia burgdorferi).